The chain runs to 275 residues: Adenosylcobinamide-GDP ribazoletransferase (275 aa).

6 helical membrane-spanning segments follow: residues 52-72 (VVGV…GVLG), 73-93 (VTPL…NRMM), 126-146 (MGFS…AALV), 181-201 (FGAM…LVAL), 208-228 (VAVW…GIIA), and 251-271 (IGAG…VAVA).

The protein belongs to the CobS family. Mg(2+) is required as a cofactor.

It is found in the cell membrane. The enzyme catalyses alpha-ribazole + adenosylcob(III)inamide-GDP = adenosylcob(III)alamin + GMP + H(+). The catalysed reaction is alpha-ribazole 5'-phosphate + adenosylcob(III)inamide-GDP = adenosylcob(III)alamin 5'-phosphate + GMP + H(+). It participates in cofactor biosynthesis; adenosylcobalamin biosynthesis; adenosylcobalamin from cob(II)yrinate a,c-diamide: step 7/7. Its function is as follows. Joins adenosylcobinamide-GDP and alpha-ribazole to generate adenosylcobalamin (Ado-cobalamin). Also synthesizes adenosylcobalamin 5'-phosphate from adenosylcobinamide-GDP and alpha-ribazole 5'-phosphate. In Corynebacterium efficiens (strain DSM 44549 / YS-314 / AJ 12310 / JCM 11189 / NBRC 100395), this protein is Adenosylcobinamide-GDP ribazoletransferase.